A 452-amino-acid polypeptide reads, in one-letter code: Friend leukemia integration 1 transcription factor (452 aa).

Phosphoserine is present on Ser39. Residues 112–198 (PPPPNMTTNE…SHLTYLRESS (87 aa)) form the PNT domain. Over residues 202–214 (YNTTSHTDPSSRL) the composition is skewed to polar residues. The interval 202 to 272 (YNTTSHTDPS…YQILGPTSSR (71 aa)) is disordered. Residues 215 to 226 (NVKEDPSYDSVR) are compositionally biased toward basic and acidic residues. The segment covering 248–257 (QTMSKNTEQR) has biased composition (polar residues). The segment at residues 281–361 (IQLWQFLLEL…HGKRYAYKFD (81 aa)) is a DNA-binding region (ETS).

Belongs to the ETS family. In terms of assembly, can form homodimers or heterodimers with ETV6/TEL1.

The protein resides in the nucleus. In terms of biological role, sequence-specific transcriptional activator. Recognizes the DNA sequence 5'-C[CA]GGAAGT-3'. The polypeptide is Friend leukemia integration 1 transcription factor (FLI1) (Bos taurus (Bovine)).